Reading from the N-terminus, the 149-residue chain is Large ribosomal subunit protein bL9 (149 aa).

It belongs to the bacterial ribosomal protein bL9 family.

Its function is as follows. Binds to the 23S rRNA. The chain is Large ribosomal subunit protein bL9 from Xylella fastidiosa (strain M23).